The primary structure comprises 800 residues: Phenylalanine--tRNA ligase beta subunit (800 aa).

The tRNA-binding domain occupies 39–154 (TKDIKNLVVG…ESQVPGTDAL (116 aa)). The B5 domain occupies 408–483 (AFITPIDITA…RIYGYDDIPS (76 aa)). Residues aspartate 461, aspartate 467, glutamate 470, and glutamate 471 each coordinate Mg(2+). The FDX-ACB domain maps to 708 to 800 (PRFPGMSRDI…ALIEQGAVIR (93 aa)).

It belongs to the phenylalanyl-tRNA synthetase beta subunit family. Type 1 subfamily. As to quaternary structure, tetramer of two alpha and two beta subunits. Mg(2+) serves as cofactor.

The protein resides in the cytoplasm. It catalyses the reaction tRNA(Phe) + L-phenylalanine + ATP = L-phenylalanyl-tRNA(Phe) + AMP + diphosphate + H(+). In Staphylococcus aureus, this protein is Phenylalanine--tRNA ligase beta subunit.